The chain runs to 953 residues: Coatomer subunit beta (953 aa).

Thr2 bears the N-acetylthreonine mark. 6 HEAT repeats span residues 96–131 (HEMILVCDAYRKDLQHPNEFIRGSTLRFLCKLKEAE), 132–168 (LLEPLMPAIRACLEHRHSYVRRNAVLAIYTIYRNFEH), 240–276 (SERARFIRCIYNLLQSSSPAVKYEAAGTLVTLSSAPT), 277–314 (AIKAAAQCYIDLIIKESDNNVKLIVLDRLIELKEHPAH), 316–353 (RVLQDLVMDILRVLSTPDLEVRKKTLQLALDLVSSRNV), and 396–433 (DMAANVIPVLMEFLSDSNEAAAADVLEFVREAIQRFDN). Residue Lys494 is modified to N6-acetyllysine.

In terms of assembly, oligomeric complex that consists of at least the alpha, beta, beta', gamma, delta, epsilon and zeta subunits. Interacts with ARF1 (myristoylated); this interaction is required for binding of COPB1 to Golgi membranes. Interacts with CAPN8 and PRKCE. Interacts with SCYL1. Interacts with COPG1. Interacts (via trunk domain) with ARF1 (via switch I region); the interaction is direct. Interacts with KCNK2 (via N-terminus); this interaction increases the channel-mediated whole cell currents and promotes plasma membrane expression of KCNK2. Interacts with STX17. Interacts with TMEM115. Interacts with TMEM41B. Proteolytically cleaved between Ser-528 and Ser-529 by CAPN8.

The protein localises to the cytoplasm. It localises to the cytosol. Its subcellular location is the golgi apparatus membrane. It is found in the cytoplasmic vesicle. The protein resides in the COPI-coated vesicle membrane. The protein localises to the cell membrane. It localises to the endoplasmic reticulum-Golgi intermediate compartment. Its function is as follows. The coatomer is a cytosolic protein complex that binds to dilysine motifs and reversibly associates with Golgi non-clathrin-coated vesicles, which further mediate biosynthetic protein transport from the ER, via the Golgi up to the trans Golgi network. Coatomer complex is required for budding from Golgi membranes, and is essential for the retrograde Golgi-to-ER transport of dilysine-tagged proteins. In mammals, the coatomer can only be recruited by membranes associated to ADP-ribosylation factors (ARFs), which are small GTP-binding proteins; the complex also influences the Golgi structural integrity, as well as the processing, activity, and endocytic recycling of LDL receptors. Involved in the Golgi disassembly and reassembly processes during cell cycle. Plays a functional role in facilitating the transport of kappa-type opioid receptor mRNAs into axons and enhances translation of these proteins. Required for limiting lipid storage in lipid droplets. Involved in lipid homeostasis by regulating the presence of perilipin family members PLIN2 and PLIN3 at the lipid droplet surface and promoting the association of adipocyte surface triglyceride lipase (PNPLA2) with the lipid droplet to mediate lipolysis. Involved in autophagy by playing a role in early endosome function. Plays a role in organellar compartmentalization of secretory compartments including endoplasmic reticulum (ER)-Golgi intermediate compartment (ERGIC), Golgi, trans-Golgi network (TGN) and recycling endosomes, and in biosynthetic transport of CAV1. The polypeptide is Coatomer subunit beta (COPB1) (Bos taurus (Bovine)).